A 335-amino-acid polypeptide reads, in one-letter code: Glyceraldehyde-3-phosphate dehydrogenase 1 (335 aa).

NAD(+) is bound by residues 12–13 (RI), aspartate 34, arginine 78, and serine 120. D-glyceraldehyde 3-phosphate contacts are provided by residues 151-153 (SCT) and threonine 182. The active-site Nucleophile is the cysteine 152. NAD(+) is bound at residue asparagine 183. D-glyceraldehyde 3-phosphate-binding positions include arginine 197, 210 to 211 (TG), and arginine 233. Asparagine 315 serves as a coordination point for NAD(+).

It belongs to the glyceraldehyde-3-phosphate dehydrogenase family. In terms of assembly, homotetramer. Interacts with BrxC. In response to oxidative stress, the active site Cys likely reacts with bacillithiol (BSH) to form mixed disulfides to protect the Cys residue against overoxidation. S-bacillithiolation presumably leads to loss of catalytic activity. Debacillithiolation by monothiol bacilliredoxin BrxC restores the activity.

Its subcellular location is the cytoplasm. It catalyses the reaction D-glyceraldehyde 3-phosphate + phosphate + NAD(+) = (2R)-3-phospho-glyceroyl phosphate + NADH + H(+). It functions in the pathway carbohydrate degradation; glycolysis; pyruvate from D-glyceraldehyde 3-phosphate: step 1/5. Involved in the glycolysis. Catalyzes the oxidative phosphorylation of glyceraldehyde 3-phosphate (G3P) to 1,3-bisphosphoglycerate (BPG) using the cofactor NAD. The first reaction step involves the formation of a hemiacetal intermediate between G3P and a cysteine residue, and this hemiacetal intermediate is then oxidized to a thioester, with concomitant reduction of NAD to NADH. The reduced NADH is then exchanged with the second NAD, and the thioester is attacked by a nucleophilic inorganic phosphate to produce BPG. The polypeptide is Glyceraldehyde-3-phosphate dehydrogenase 1 (Bacillus subtilis (strain 168)).